A 258-amino-acid chain; its full sequence is MLILISPAKTLDYQSPLTTTRYTLPELLDNAQQLIHEARKLTPPQISSLMRISDKLAGINAARFHDWQPNFTPENARQAILAFKGDVYTGLQAETFSEDDFDFAQQHLRMLSGLYGVLRPLDLMQPYRLEMGIRLENARGKDLYQFWGDIITNKLNEALAAQGDNVVINLASDEYFKSVKPKKLNAEIIKPVFLDEKNGKFKIISFYAKKARGLMSRFIIENRLTKPEQLTGFNSEGYFFDEASSSNGELVFKRYEQR.

This sequence belongs to the UPF0246 family.

In Escherichia coli O6:K15:H31 (strain 536 / UPEC), this protein is UPF0246 protein YaaA.